The sequence spans 164 residues: FMN reductase (NADH) RutF (164 aa).

Belongs to the non-flavoprotein flavin reductase family. RutF subfamily.

The enzyme catalyses FMNH2 + NAD(+) = FMN + NADH + 2 H(+). Its function is as follows. Catalyzes the reduction of FMN to FMNH2 which is used to reduce pyrimidine by RutA via the Rut pathway. The polypeptide is FMN reductase (NADH) RutF (Escherichia coli O81 (strain ED1a)).